We begin with the raw amino-acid sequence, 227 residues long: Uracil-DNA glycosylase 2 (227 aa).

The active-site Proton acceptor is the aspartate 67.

Belongs to the uracil-DNA glycosylase (UDG) superfamily. UNG family.

Its subcellular location is the cytoplasm. It catalyses the reaction Hydrolyzes single-stranded DNA or mismatched double-stranded DNA and polynucleotides, releasing free uracil.. Excises uracil residues from the DNA which can arise as a result of misincorporation of dUMP residues by DNA polymerase or due to deamination of cytosine. The chain is Uracil-DNA glycosylase 2 (ung2) from Streptomyces coelicolor (strain ATCC BAA-471 / A3(2) / M145).